Consider the following 467-residue polypeptide: Bifunctional enzyme LpxC/FabZ (467 aa).

The UDP-3-O-acyl-N-acetylglucosamine deacetylase stretch occupies residues 1–306; sequence MLIHQRTLQN…FVKQLKKYAD (306 aa). Zn(2+) contacts are provided by His79, His264, and Asp268. The active-site Proton donor is His291. The 3-hydroxyacyl-[acyl-carrier-protein] dehydratase stretch occupies residues 307–467; it reads RNKLARQYQH…LMATVMEKKN (161 aa). His370 is a catalytic residue.

It in the N-terminal section; belongs to the LpxC family. This sequence in the C-terminal section; belongs to the thioester dehydratase family. Zn(2+) serves as cofactor.

The protein localises to the cytoplasm. It catalyses the reaction a UDP-3-O-[(3R)-3-hydroxyacyl]-N-acetyl-alpha-D-glucosamine + H2O = a UDP-3-O-[(3R)-3-hydroxyacyl]-alpha-D-glucosamine + acetate. The enzyme catalyses a (3R)-hydroxyacyl-[ACP] = a (2E)-enoyl-[ACP] + H2O. It functions in the pathway glycolipid biosynthesis; lipid IV(A) biosynthesis; lipid IV(A) from (3R)-3-hydroxytetradecanoyl-[acyl-carrier-protein] and UDP-N-acetyl-alpha-D-glucosamine: step 2/6. Its function is as follows. Catalyzes the hydrolysis of UDP-3-O-myristoyl-N-acetylglucosamine to form UDP-3-O-myristoylglucosamine and acetate, the committed step in lipid A biosynthesis. Functionally, involved in unsaturated fatty acids biosynthesis. Catalyzes the dehydration of short chain beta-hydroxyacyl-ACPs and long chain saturated and unsaturated beta-hydroxyacyl-ACPs. The chain is Bifunctional enzyme LpxC/FabZ (lpxC/fabZ) from Chlorobaculum tepidum (strain ATCC 49652 / DSM 12025 / NBRC 103806 / TLS) (Chlorobium tepidum).